We begin with the raw amino-acid sequence, 502 residues long: RNA-splicing ligase RtcB homolog 2 (502 aa).

5 residues coordinate Mn(2+): aspartate 120, cysteine 123, histidine 228, histidine 260, and histidine 354. Asparagine 227 to glutamate 231 provides a ligand contact to GMP. Residues histidine 354–asparagine 355, glycine 403–methionine 406, serine 410, and histidine 429–glycine 432 contribute to the GMP site. Residue histidine 429 is the GMP-histidine intermediate of the active site.

This sequence belongs to the RtcB family. As to quaternary structure, catalytic component of the tRNA-splicing ligase complex. Requires Mn(2+) as cofactor.

It carries out the reaction a 3'-end 3'-phospho-ribonucleotide-RNA + a 5'-end dephospho-ribonucleoside-RNA + GTP = a ribonucleotidyl-ribonucleotide-RNA + GMP + diphosphate. The enzyme catalyses a 3'-end 2',3'-cyclophospho-ribonucleotide-RNA + a 5'-end dephospho-ribonucleoside-RNA + GTP + H2O = a ribonucleotidyl-ribonucleotide-RNA + GMP + diphosphate + H(+). Functionally, catalytic subunit of the tRNA-splicing ligase complex that acts by directly joining spliced tRNA halves to mature-sized tRNAs by incorporating the precursor-derived splice junction phosphate into the mature tRNA as a canonical 3',5'-phosphodiester. May act as an RNA ligase with broad substrate specificity, and may function toward other RNAs. This is RNA-splicing ligase RtcB homolog 2 from Culex quinquefasciatus (Southern house mosquito).